The chain runs to 58 residues: Large ribosomal subunit protein uL30 (58 aa).

The protein belongs to the universal ribosomal protein uL30 family. Part of the 50S ribosomal subunit.

The protein is Large ribosomal subunit protein uL30 of Novosphingobium aromaticivorans (strain ATCC 700278 / DSM 12444 / CCUG 56034 / CIP 105152 / NBRC 16084 / F199).